Reading from the N-terminus, the 400-residue chain is EARP-interacting protein homolog (400 aa).

The tract at residues 95-114 is disordered; sequence NNNSNNTNNNDNTNNNTNNN. Residues 96–114 show a composition bias toward low complexity; sequence NNSNNTNNNDNTNNNTNNN. WD repeat units lie at residues 138-178, 227-267, and 271-311; these read GHTG…NEPT, AHSE…DPVK, and GHNH…SAFN. The segment covering 314-333 has biased composition (low complexity); it reads NNISNSNEQQHSQQPNEQQP. A disordered region spans residues 314-348; the sequence is NNISNSNEQQHSQQPNEQQPQQPPQPVKQKKNKRN. One copy of the WD 4 repeat lies at 358–397; sequence EHEDSVYNISWSSSNFLFASLSYDGRFVVNNVPKEYSDIL.

Belongs to the WD repeat EIPR1 family.

The chain is EARP-interacting protein homolog from Dictyostelium discoideum (Social amoeba).